Here is a 210-residue protein sequence, read N- to C-terminus: Protein GrpE (210 aa).

The tract at residues 1-71 (MSEKDQSVNN…DTKIKELEKL (71 aa)) is disordered. Acidic residues predominate over residues 11-23 (TEEDFNVETEDNQ). Residues 24–35 (NDTNIENSVSNT) show a composition bias toward polar residues. Residues 36–46 (DNSEANASDSE) are compositionally biased toward low complexity. Over residues 47 to 60 (NNSEESIKDEESES) the composition is skewed to acidic residues. Residues 61–71 (QDTKIKELEKL) show a composition bias toward basic and acidic residues.

It belongs to the GrpE family. As to quaternary structure, homodimer.

The protein localises to the cytoplasm. Its function is as follows. Participates actively in the response to hyperosmotic and heat shock by preventing the aggregation of stress-denatured proteins, in association with DnaK and GrpE. It is the nucleotide exchange factor for DnaK and may function as a thermosensor. Unfolded proteins bind initially to DnaJ; upon interaction with the DnaJ-bound protein, DnaK hydrolyzes its bound ATP, resulting in the formation of a stable complex. GrpE releases ADP from DnaK; ATP binding to DnaK triggers the release of the substrate protein, thus completing the reaction cycle. Several rounds of ATP-dependent interactions between DnaJ, DnaK and GrpE are required for fully efficient folding. The polypeptide is Protein GrpE (Staphylococcus epidermidis (strain ATCC 35984 / DSM 28319 / BCRC 17069 / CCUG 31568 / BM 3577 / RP62A)).